A 523-amino-acid polypeptide reads, in one-letter code: Sodium-dependent lysophosphatidylcholine symporter 1-B (523 aa).

The Cytoplasmic segment spans residues 1 to 34; the sequence is MAKGEGAEQYTNTSLLQKPSPDEVKLAKHETKSR. Residues 35–64 traverse the membrane as a helical segment; sequence LSVCSKLCYAIGGAPYQITGCAIGFFLQIY. At 65–75 the chain is on the extracellular side; the sequence is LLDVALLDPFY. The chain crosses the membrane as a helical span at residues 76–96; sequence ASIILFVGRAWDAVTDPTVGF. Over 97–108 the chain is Cytoplasmic; that stretch reads LVSRTPWTRFGR. The helical transmembrane segment at 109–128 threads the bilayer; that stretch reads MMPWIVLSTPFAVLCYFLIW. The Extracellular segment spans residues 129–138; it reads YVPSVDQGKV. Residues 139 to 163 traverse the membrane as a helical segment; that stretch reads VWYLIFYCCFQTLQTCFHVPYSALT. The Cytoplasmic portion of the chain corresponds to 164 to 170; that stretch reads MFISTEQ. The helical transmembrane segment at 171-202 threads the bilayer; sequence KERDSATAYRMTVEVLGTLIGTAIQGQIVGMA. Residues 203–226 lie on the Extracellular side of the membrane; that stretch reads NAPCISTEIDLNSTGLEVAPDVNI. An intrachain disulfide couples C206 to C457. N214 and N225 each carry an N-linked (GlcNAc...) asparagine glycan. Residues 227-260 form a helical membrane-spanning segment; it reads TDPHVSLQDLRNAYMIASGVICAIYVVCAVVLFL. The Cytoplasmic portion of the chain corresponds to 261–290; sequence GVKEQKDTCRVRTEPMSFFQGICMVMGHGP. A helical transmembrane segment spans residues 291–317; that stretch reads YAKLVMGFLFTSLAFMLLEGNFALFCI. The Extracellular portion of the chain corresponds to 318–328; it reads YNLGFRNDFQN. Residues 329-347 traverse the membrane as a helical segment; it reads VLLVIMLSATLAIPFWQWF. The Cytoplasmic portion of the chain corresponds to 348–351; the sequence is LTKF. The helical transmembrane segment at 352-373 threads the bilayer; sequence GKKTAVYIGTTSVVPFLISVVL. Topologically, residues 374–376 are extracellular; sequence VPS. Residues 377 to 413 form a helical membrane-spanning segment; the sequence is SLAVTYIASFAAGVSVAAAFLLPWSMLPDVVDDFKVQ. The Cytoplasmic portion of the chain corresponds to 414–423; the sequence is NPESQGHEAI. A helical membrane pass occupies residues 424-450; sequence FYSFYVFFTKFASGVSLGVSTLSLDFA. Over 451-462 the chain is Extracellular; the sequence is GYVTRGCTQPGE. A helical transmembrane segment spans residues 463 to 486; sequence VKLTLKILVSAAPIVLIIIGLLIF. Topologically, residues 487–523 are cytoplasmic; it reads ISYPINEEKRQGNRKLLNEQRENEMDSETDSTELNVV. Residues 504-523 are disordered; it reads NEQRENEMDSETDSTELNVV.

The protein belongs to the major facilitator superfamily. In terms of tissue distribution, expressed in the developing nervous system.

Its subcellular location is the cell membrane. The protein resides in the endoplasmic reticulum membrane. The enzyme catalyses a 1-acyl-sn-glycero-3-phosphocholine(in) + Na(+)(in) = a 1-acyl-sn-glycero-3-phosphocholine(out) + Na(+)(out). It catalyses the reaction 1-(4Z,7Z,10Z,13Z,16Z,19Z-docosahexaenoyl)-sn-glycero-3-phosphocholine(in) + Na(+)(in) = 1-(4Z,7Z,10Z,13Z,16Z,19Z-docosahexaenoyl)-sn-glycero-3-phosphocholine(out) + Na(+)(out). It carries out the reaction 1-(9Z-octadecenoyl)-sn-glycero-3-phosphocholine(in) + Na(+)(in) = 1-(9Z-octadecenoyl)-sn-glycero-3-phosphocholine(out) + Na(+)(out). The catalysed reaction is 1-hexadecanoyl-sn-glycero-3-phosphocholine(in) + Na(+)(in) = 1-hexadecanoyl-sn-glycero-3-phosphocholine(out) + Na(+)(out). The enzyme catalyses a 1-acyl-sn-glycero-3-phosphoethanolamine(in) + Na(+)(in) = a 1-acyl-sn-glycero-3-phosphoethanolamine(out) + Na(+)(out). Functionally, sodium-dependent lysophosphatidylcholine (LPC) symporter, which plays an essential role for blood-brain barrier formation and function. Specifically expressed in endothelium of the blood-brain barrier of micro-vessels and transports LPC into the brain. Transport of LPC is essential because it constitutes the major mechanism by which docosahexaenoic acid (DHA), an omega-3 fatty acid that is essential for normal brain growth and cognitive function, enters the brain. Transports LPC carrying long-chain fatty acids such LPC oleate and LPC palmitate with a minimum acyl chain length of 14 carbons. Does not transport docosahexaenoic acid in unesterified fatty acid. The sequence is that of Sodium-dependent lysophosphatidylcholine symporter 1-B (mfsd2ab) from Danio rerio (Zebrafish).